Consider the following 384-residue polypeptide: DNA dC-&gt;dU-editing enzyme APOBEC-3G (384 aa).

The segment at Met1–Ser60 is essential for cytoplasmic localization. 2 consecutive CMP/dCMP-type deaminase domains span residues His29–Leu138 and Gly214–Leu328. At Thr32 the chain carries Phosphothreonine; by PKA. 3 residues coordinate Zn(2+): His65, Cys97, and Cys100. Residues Glu209–Ser336 form a necessary for homooligomerization region. An interaction with DNA region spans residues Arg213–Arg215. Thr218 is modified (phosphothreonine; by PKA and CAMK2). His257 lines the Zn(2+) pocket. Glu259 acts as the Proton donor in catalysis. 2 residues coordinate Zn(2+): Cys288 and Cys291. Residues Arg313–Arg320 form an interaction with DNA region.

The protein belongs to the cytidine and deoxycytidylate deaminase family. Homodimer. Homooligomer. Can bind RNA to form ribonucleoprotein complexes of high-molecular-mass (HMM) or low-molecular-mass (LMM). HMM is inactive and heterogeneous in protein composition because of binding nonselectively to cellular RNAs, which in turn are associated with variety of cellular proteins. The LMM form which is enzymatically active has few or no RNAs associated. Its ability to form homooligomer is distinct from its ability to assemble into HMM. Interacts with APOBEC3B, APOBEC3F, MOV10, AGO2, EIF4E, EIF4ENIF1, DCP2 and DDX6 in an RNA-dependent manner. Interacts with AGO1, AGO3 and PKA/PRKACA. Requires Zn(2+) as cofactor.

It is found in the cytoplasm. The protein localises to the nucleus. The protein resides in the P-body. The catalysed reaction is a 2'-deoxycytidine in single-stranded DNA + H2O + H(+) = a 2'-deoxyuridine in single-stranded DNA + NH4(+). Functionally, DNA deaminase (cytidine deaminase) which acts as an inhibitor of retrovirus replication and retrotransposon mobility via deaminase-dependent and -independent mechanisms. Exhibits antiviral activity against vif-deficient: HIV-1 and simian immunodeficiency viruses (SIVs) and also against simian foamy virus (SFV). After the penetration of retroviral nucleocapsids into target cells of infection and the initiation of reverse transcription, it can induce the conversion of cytosine to uracil in the minus-sense single-strand viral DNA, leading to G-to-A hypermutations in the subsequent plus-strand viral DNA. The resultant detrimental levels of mutations in the proviral genome, along with a deamination-independent mechanism that works prior to the proviral integration, together exert efficient antiretroviral effects in infected target cells. Selectively targets single-stranded DNA and does not deaminate double-stranded DNA or single- or double-stranded RNA. May inhibit the mobility of LTR retrotransposons. In Pan troglodytes (Chimpanzee), this protein is DNA dC-&gt;dU-editing enzyme APOBEC-3G (APOBEC3G).